A 79-amino-acid polypeptide reads, in one-letter code: uncharacterized protein (79 aa).

The disordered stretch occupies residues 20–52 (TERGAGLSPAAPPDPSPAIAPTMAEGGVPSPGP).

This is an uncharacterized protein from Homo sapiens (Human).